A 513-amino-acid polypeptide reads, in one-letter code: Proline-rich receptor-like protein kinase PERK3 (513 aa).

Residues Met-1–Thr-123 are Extracellular-facing. N-linked (GlcNAc...) asparagine glycosylation occurs at Asn-11. Positions Leu-27–Met-36 are enriched in polar residues. Residues Leu-27–Ser-119 form a disordered region. Residue Asn-66 is glycosylated (N-linked (GlcNAc...) asparagine). Over residues Pro-78–Arg-89 the composition is skewed to low complexity. Residues Gly-99–Phe-111 show a composition bias toward polar residues. A helical transmembrane segment spans residues Gly-124–Leu-144. At Cys-145 to Leu-513 the chain is on the cytoplasmic side. A Phosphothreonine modification is found at Thr-172. Residues Phe-183–Asp-334 enclose the Protein kinase domain. Residues Leu-189–Val-197 and Lys-211 contribute to the ATP site. A Phosphotyrosine modification is found at Tyr-256. The active-site Proton acceptor is the Asp-307. Ser-340 is subject to Phosphoserine. Thr-341 and Thr-346 each carry phosphothreonine. The residue at position 354 (Tyr-354) is a Phosphotyrosine.

It belongs to the protein kinase superfamily. Ser/Thr protein kinase family. Expressed at low levels in inflorescence bolt, flower buds, siliques, roots, seedlings and leaves.

The protein resides in the cell membrane. It carries out the reaction L-seryl-[protein] + ATP = O-phospho-L-seryl-[protein] + ADP + H(+). The enzyme catalyses L-threonyl-[protein] + ATP = O-phospho-L-threonyl-[protein] + ADP + H(+). This is Proline-rich receptor-like protein kinase PERK3 (PERK3) from Arabidopsis thaliana (Mouse-ear cress).